Here is a 525-residue protein sequence, read N- to C-terminus: Putative EGF-like domain-containing protein R659 (525 aa).

The first 24 residues, 1–24, serve as a signal peptide directing secretion; it reads MGNKWCGIFLTILLLAQMSQTIFG. N-linked (GlcNAc...) asparagine; by host glycans are attached at residues Asn60, Asn77, Asn171, Asn181, Asn268, and Asn281. The 43-residue stretch at 317-359 folds into the EGF-like domain; that stretch reads LTQGCGNCDSNAECVFVSGSNSIVPKYQCKCKSGYVGNGTHCS. Cystine bridges form between Cys321/Cys330, Cys324/Cys345, and Cys347/Cys358. N-linked (GlcNAc...) asparagine; by host glycosylation is found at Asn354 and Asn411.

Its subcellular location is the secreted. This Acanthamoeba polyphaga (Amoeba) protein is Putative EGF-like domain-containing protein R659.